Here is a 108-residue protein sequence, read N- to C-terminus: Movement protein TGB2 (108 aa).

The Cytoplasmic segment spans residues 1-8 (MPLTPPPN). The chain crosses the membrane as a helical span at residues 9 to 29 (YTGLYIAAALGVSLAAVVALF). At 30-72 (TRSTLPIVGDSQHNLPHGGRYRDGTKAIDYFKPTKLNSVEPGN) the chain is on the lumenal side. Residues 73 to 93 (YWYTQPWLLVILLVALICLSG) traverse the membrane as a helical segment. Topologically, residues 94–108 (RHAQCCPRCNRVHSA) are cytoplasmic.

The protein belongs to the Tymovirales TGBp2 protein family.

The protein resides in the host endoplasmic reticulum membrane. Functionally, plays a role in viral cell-to-cell propagation, by facilitating genome transport to neighboring plant cells through plasmosdesmata,. The protein is Movement protein TGB2 of Solanum tuberosum (Potato).